The following is a 242-amino-acid chain: Segregation and condensation protein A (242 aa).

It belongs to the ScpA family. As to quaternary structure, component of a cohesin-like complex composed of ScpA, ScpB and the Smc homodimer, in which ScpA and ScpB bind to the head domain of Smc. The presence of the three proteins is required for the association of the complex with DNA.

Its subcellular location is the cytoplasm. In terms of biological role, participates in chromosomal partition during cell division. May act via the formation of a condensin-like complex containing Smc and ScpB that pull DNA away from mid-cell into both cell halves. This chain is Segregation and condensation protein A, found in Lactococcus lactis subsp. lactis (strain IL1403) (Streptococcus lactis).